A 249-amino-acid chain; its full sequence is Putative TrmH family tRNA/rRNA methyltransferase YacO (249 aa).

Residues glycine 198, leucine 218, and leucine 227 each contribute to the S-adenosyl-L-methionine site.

It belongs to the class IV-like SAM-binding methyltransferase superfamily. RNA methyltransferase TrmH family.

This is Putative TrmH family tRNA/rRNA methyltransferase YacO (yacO) from Bacillus subtilis (strain 168).